Consider the following 147-residue polypeptide: Putative pre-16S rRNA nuclease (147 aa).

The protein belongs to the YqgF nuclease family.

Its subcellular location is the cytoplasm. Could be a nuclease involved in processing of the 5'-end of pre-16S rRNA. This is Putative pre-16S rRNA nuclease from Acinetobacter baylyi (strain ATCC 33305 / BD413 / ADP1).